The sequence spans 109 residues: Thioredoxin (109 aa).

Positions 2–109 (TNCIVELTDG…LKDFLNLYLK (108 aa)) constitute a Thioredoxin domain. C33 and C36 are joined by a disulfide.

Belongs to the thioredoxin family.

Functionally, participates in various redox reactions through the reversible oxidation of its active center dithiol to a disulfide and catalyzes dithiol-disulfide exchange reactions. The chain is Thioredoxin (trxA) from Buchnera aphidicola subsp. Baizongia pistaciae (strain Bp).